We begin with the raw amino-acid sequence, 353 residues long: Photosystem II D2 protein (353 aa).

At T2 the chain carries N-acetylthreonine. T2 carries the post-translational modification Phosphothreonine. The helical transmembrane segment at 41-61 (CAYFALGGWFTGTTFVTSWYT) threads the bilayer. Residue H118 coordinates chlorophyll a. The chain crosses the membrane as a helical span at residues 125-141 (GFMLRQFELARSVQLRP). Residues Q130 and N143 each contribute to the pheophytin a site. Residues 153–166 (VFVSVFLIYPLGQS) form a helical membrane-spanning segment. H198 lines the chlorophyll a pocket. The chain crosses the membrane as a helical span at residues 208 to 228 (AALLCAIHGATVENTLFEDGD). A plastoquinone contacts are provided by H215 and F262. Fe cation is bound at residue H215. H269 contacts Fe cation. A helical transmembrane segment spans residues 279 to 295 (GLWMSALGVVGLALNLR).

The protein belongs to the reaction center PufL/M/PsbA/D family. PSII is composed of 1 copy each of membrane proteins PsbA, PsbB, PsbC, PsbD, PsbE, PsbF, PsbH, PsbI, PsbJ, PsbK, PsbL, PsbM, PsbT, PsbX, PsbY, PsbZ, Psb30/Ycf12, at least 3 peripheral proteins of the oxygen-evolving complex and a large number of cofactors. It forms dimeric complexes. The D1/D2 heterodimer binds P680, chlorophylls that are the primary electron donor of PSII, and subsequent electron acceptors. It shares a non-heme iron and each subunit binds pheophytin, quinone, additional chlorophylls, carotenoids and lipids. There is also a Cl(-1) ion associated with D1 and D2, which is required for oxygen evolution. The PSII complex binds additional chlorophylls, carotenoids and specific lipids. is required as a cofactor.

Its subcellular location is the plastid. The protein resides in the chloroplast thylakoid membrane. The catalysed reaction is 2 a plastoquinone + 4 hnu + 2 H2O = 2 a plastoquinol + O2. Photosystem II (PSII) is a light-driven water:plastoquinone oxidoreductase that uses light energy to abstract electrons from H(2)O, generating O(2) and a proton gradient subsequently used for ATP formation. It consists of a core antenna complex that captures photons, and an electron transfer chain that converts photonic excitation into a charge separation. The D1/D2 (PsbA/PsbD) reaction center heterodimer binds P680, the primary electron donor of PSII as well as several subsequent electron acceptors. D2 is needed for assembly of a stable PSII complex. This is Photosystem II D2 protein from Barbarea verna (Land cress).